The chain runs to 360 residues: UDP-N-acetylglucosamine--N-acetylmuramyl-(pentapeptide) pyrophosphoryl-undecaprenol N-acetylglucosamine transferase (360 aa).

UDP-N-acetyl-alpha-D-glucosamine contacts are provided by residues Thr-15–Gly-17, Asn-127, Arg-163, Ser-191, Ile-249, Ala-268–Glu-273, and Gln-293.

Belongs to the glycosyltransferase 28 family. MurG subfamily.

It is found in the cell inner membrane. The enzyme catalyses di-trans,octa-cis-undecaprenyl diphospho-N-acetyl-alpha-D-muramoyl-L-alanyl-D-glutamyl-meso-2,6-diaminopimeloyl-D-alanyl-D-alanine + UDP-N-acetyl-alpha-D-glucosamine = di-trans,octa-cis-undecaprenyl diphospho-[N-acetyl-alpha-D-glucosaminyl-(1-&gt;4)]-N-acetyl-alpha-D-muramoyl-L-alanyl-D-glutamyl-meso-2,6-diaminopimeloyl-D-alanyl-D-alanine + UDP + H(+). The protein operates within cell wall biogenesis; peptidoglycan biosynthesis. Its function is as follows. Cell wall formation. Catalyzes the transfer of a GlcNAc subunit on undecaprenyl-pyrophosphoryl-MurNAc-pentapeptide (lipid intermediate I) to form undecaprenyl-pyrophosphoryl-MurNAc-(pentapeptide)GlcNAc (lipid intermediate II). The polypeptide is UDP-N-acetylglucosamine--N-acetylmuramyl-(pentapeptide) pyrophosphoryl-undecaprenol N-acetylglucosamine transferase (Proteus mirabilis (strain HI4320)).